A 441-amino-acid chain; its full sequence is Proline--tRNA ligase (441 aa).

Belongs to the class-II aminoacyl-tRNA synthetase family. ProS type 2 subfamily. Homodimer.

The protein localises to the cytoplasm. The enzyme catalyses tRNA(Pro) + L-proline + ATP = L-prolyl-tRNA(Pro) + AMP + diphosphate. Catalyzes the attachment of proline to tRNA(Pro) in a two-step reaction: proline is first activated by ATP to form Pro-AMP and then transferred to the acceptor end of tRNA(Pro). The sequence is that of Proline--tRNA ligase from Bartonella quintana (strain Toulouse) (Rochalimaea quintana).